Consider the following 62-residue polypeptide: Large ribosomal subunit protein bL28 (62 aa).

This sequence belongs to the bacterial ribosomal protein bL28 family.

The sequence is that of Large ribosomal subunit protein bL28 from Streptococcus thermophilus (strain CNRZ 1066).